The sequence spans 309 residues: Ornithine carbamoyltransferase (309 aa).

Carbamoyl phosphate is bound by residues 56-59 (STRT), Q83, R107, and 134-137 (HPCQ). L-ornithine is bound by residues N165, D223, and 227 to 228 (SM). Residues 263 to 264 (CL) and R291 contribute to the carbamoyl phosphate site.

This sequence belongs to the aspartate/ornithine carbamoyltransferase superfamily. OTCase family.

Its subcellular location is the cytoplasm. The catalysed reaction is carbamoyl phosphate + L-ornithine = L-citrulline + phosphate + H(+). It functions in the pathway amino-acid biosynthesis; L-arginine biosynthesis; L-arginine from L-ornithine and carbamoyl phosphate: step 1/3. In terms of biological role, reversibly catalyzes the transfer of the carbamoyl group from carbamoyl phosphate (CP) to the N(epsilon) atom of ornithine (ORN) to produce L-citrulline. The polypeptide is Ornithine carbamoyltransferase (Burkholderia mallei (strain ATCC 23344)).